The chain runs to 184 residues: MNWRSEWLWIEPITGSRRTSNFCRACILFFGSLGFFLVGISSYLGKNLIPVLSSQQILFVPQGIVMCFYGIAGLFISSYLWCTILWNVGSGYDKFDEEEGIVCLFRWGFPGRNRRTFLRFLMKDIQAIKMEVQEGLYPRRVLYMEIKGQRDIPLARTGENLTLREMEQKAAELARFLRISIEVF.

Helical transmembrane passes span 25-45 (ACIL…SYLG) and 57-77 (ILFV…LFIS).

Belongs to the Ycf4 family.

The protein resides in the plastid. Its subcellular location is the chloroplast thylakoid membrane. Seems to be required for the assembly of the photosystem I complex. The polypeptide is Photosystem I assembly protein Ycf4 (Cycas taitungensis (Prince sago)).